A 454-amino-acid polypeptide reads, in one-letter code: CCA-adding enzyme (454 aa).

ATP contacts are provided by Ser-59 and Arg-62. CTP is bound by residues Ser-59 and Arg-62. Mg(2+) contacts are provided by Asp-71, Asp-73, and Asp-125. His-148, Lys-167, and Tyr-176 together coordinate ATP. Positions 148, 167, and 176 each coordinate CTP.

It belongs to the tRNA nucleotidyltransferase/poly(A) polymerase family. Archaeal CCA-adding enzyme subfamily. In terms of assembly, homodimer. Mg(2+) is required as a cofactor.

It carries out the reaction a tRNA precursor + 2 CTP + ATP = a tRNA with a 3' CCA end + 3 diphosphate. It catalyses the reaction a tRNA with a 3' CCA end + 2 CTP + ATP = a tRNA with a 3' CCACCA end + 3 diphosphate. Functionally, catalyzes the addition and repair of the essential 3'-terminal CCA sequence in tRNAs without using a nucleic acid template. Adds these three nucleotides in the order of C, C, and A to the tRNA nucleotide-73, using CTP and ATP as substrates and producing inorganic pyrophosphate. tRNA 3'-terminal CCA addition is required both for tRNA processing and repair. Also involved in tRNA surveillance by mediating tandem CCA addition to generate a CCACCA at the 3' terminus of unstable tRNAs. While stable tRNAs receive only 3'-terminal CCA, unstable tRNAs are marked with CCACCA and rapidly degraded. The sequence is that of CCA-adding enzyme from Methanosarcina acetivorans (strain ATCC 35395 / DSM 2834 / JCM 12185 / C2A).